Here is a 345-residue protein sequence, read N- to C-terminus: Methylthioribose-1-phosphate isomerase (345 aa).

Substrate is bound by residues 44–46, arginine 86, and glutamine 194; that span reads RGA. Catalysis depends on aspartate 235, which acts as the Proton donor. Position 245–246 (245–246) interacts with substrate; that stretch reads NK.

It belongs to the eIF-2B alpha/beta/delta subunits family. MtnA subfamily.

It catalyses the reaction 5-(methylsulfanyl)-alpha-D-ribose 1-phosphate = 5-(methylsulfanyl)-D-ribulose 1-phosphate. Its pathway is amino-acid biosynthesis; L-methionine biosynthesis via salvage pathway; L-methionine from S-methyl-5-thio-alpha-D-ribose 1-phosphate: step 1/6. Its function is as follows. Catalyzes the interconversion of methylthioribose-1-phosphate (MTR-1-P) into methylthioribulose-1-phosphate (MTRu-1-P). This chain is Methylthioribose-1-phosphate isomerase, found in Desulfitobacterium hafniense (strain DSM 10664 / DCB-2).